The primary structure comprises 366 residues: Alanine racemase (366 aa).

Residue Lys33 is the Proton acceptor; specific for D-alanine of the active site. Lys33 carries the N6-(pyridoxal phosphate)lysine modification. Arg129 serves as a coordination point for substrate. Catalysis depends on Tyr253, which acts as the Proton acceptor; specific for L-alanine. Met301 lines the substrate pocket.

This sequence belongs to the alanine racemase family. Requires pyridoxal 5'-phosphate as cofactor.

The enzyme catalyses L-alanine = D-alanine. Its pathway is amino-acid biosynthesis; D-alanine biosynthesis; D-alanine from L-alanine: step 1/1. In terms of biological role, catalyzes the interconversion of L-alanine and D-alanine. May also act on other amino acids. The chain is Alanine racemase (alr) from Xanthomonas oryzae pv. oryzae (strain KACC10331 / KXO85).